Consider the following 76-residue polypeptide: UPF0270 protein PSPA7_1664 (76 aa).

The protein belongs to the UPF0270 family.

This is UPF0270 protein PSPA7_1664 from Pseudomonas paraeruginosa (strain DSM 24068 / PA7) (Pseudomonas aeruginosa (strain PA7)).